Reading from the N-terminus, the 129-residue chain is Small ribosomal subunit protein uS11 (129 aa).

Belongs to the universal ribosomal protein uS11 family. In terms of assembly, part of the 30S ribosomal subunit. Interacts with proteins S7 and S18. Binds to IF-3.

Functionally, located on the platform of the 30S subunit, it bridges several disparate RNA helices of the 16S rRNA. Forms part of the Shine-Dalgarno cleft in the 70S ribosome. The sequence is that of Small ribosomal subunit protein uS11 from Phenylobacterium zucineum (strain HLK1).